The primary structure comprises 348 residues: MTIFTKERKLLLAVESSCDETSVAVIEDGDKILSNIVASQIKSHQRFGGVVPEVASRHHVEQVTICIEEALTEAKVTPEELSGVAVTYGPGLVGALLIGLSAAKAFAWAHQLPLIPVNHMAGHIYAARFVAPLEFPLMALLVSGGHTELVYMKEDGSFEIVGETRDDAAGEAYDKVGRVLGLPYPSGKEIDALAHEGTDTYQFPRAMLKEDNYDFSFSGLKSAFINTVHNAEQRGEALSTKDLAASFQASVVEVLVTKTIRACQEYPVKQLLIAGGVAANQGLREAMRHAISEQLPAVTLLIPPLKLCGDNAAMIGAAAFIEAEKNHFASYNLNAEPGVSFMTISEEG.

Fe cation is bound by residues His119 and His123. Substrate contacts are provided by residues 141 to 145 (LVSGG), Asp174, Gly187, Asp191, and Asn280. Asp310 provides a ligand contact to Fe cation.

Belongs to the KAE1 / TsaD family. It depends on Fe(2+) as a cofactor.

It localises to the cytoplasm. The enzyme catalyses L-threonylcarbamoyladenylate + adenosine(37) in tRNA = N(6)-L-threonylcarbamoyladenosine(37) in tRNA + AMP + H(+). Required for the formation of a threonylcarbamoyl group on adenosine at position 37 (t(6)A37) in tRNAs that read codons beginning with adenine. Is involved in the transfer of the threonylcarbamoyl moiety of threonylcarbamoyl-AMP (TC-AMP) to the N6 group of A37, together with TsaE and TsaB. TsaD likely plays a direct catalytic role in this reaction. This chain is tRNA N6-adenosine threonylcarbamoyltransferase, found in Enterococcus faecalis (strain ATCC 700802 / V583).